The primary structure comprises 486 residues: Putative ankyrin repeat protein R634 (486 aa).

ANK repeat units lie at residues 84–113 (DLFK…NVRE), 114–143 (HNDV…DLYA), 145–173 (KNTL…NFRE), 174–203 (NCDT…DVNS), 205–233 (SHKS…NIDW), 234–263 (RHNY…NLEI), 265–293 (DGCI…EIGF), 307–336 (NKIT…ATIK), 337–366 (EKNY…SLEK), 367–396 (KINK…NVKT), 398–426 (EGLP…DVTS), and 427–456 (YDNY…NVND).

The protein is Putative ankyrin repeat protein R634 of Acanthamoeba polyphaga (Amoeba).